The primary structure comprises 882 residues: Liprin-beta-2 (882 aa).

A coiled-coil region spans residues 101 to 303 (AASNETYQER…DKDRRIEELT (203 aa)). A phosphoserine mark is found at serine 328, serine 362, and serine 386. The segment at 339–554 (RKWNTTNKSP…SRTRDTKGQK (216 aa)) is disordered. Positions 388-399 (EDLRRESGDKCV) are enriched in basic and acidic residues. Composition is skewed to polar residues over residues 442–457 (PTAS…SQPK) and 481–495 (SSAS…QSPV). Phosphoserine is present on residues serine 502 and serine 518. The span at 502–515 (SPKGIKKFWGKIRR) shows a compositional bias: basic residues. 3 SAM domains span residues 564 to 628 (WSTE…INAK), 636 to 699 (LDHI…LHVN), and 724 to 789 (WSNH…KFNA).

This sequence belongs to the liprin family. Liprin-beta subfamily. In terms of assembly, forms homodimers and heterodimers. Expressed widely. Strong expression in liver, kidney, intestine, heart, lung and testis. Low expression in brain and thymus.

Functionally, may regulate the disassembly of focal adhesions. Did not bind receptor-like tyrosine phosphatases type 2A. The chain is Liprin-beta-2 (Ppfibp2) from Mus musculus (Mouse).